Here is a 141-residue protein sequence, read N- to C-terminus: Relaxin-3 (141 aa).

Positions 1-24 (MAMLGLLLLASWALLGALGLQAEA) are cleaved as a signal peptide. Disulfide bonds link Cys34–Cys128, Cys46–Cys141, and Cys127–Cys132. The propeptide at 54–117 (ADILAHESLG…GSPGVVRGSR (64 aa)) is connecting peptide.

It belongs to the insulin family. In terms of assembly, heterodimer of a B chain and an A chain linked by two disulfide bonds. In terms of tissue distribution, high expression in the brain localized to the pons/medulla with highest levels in pars ventromedialis of the dorsal tegmental nucleus. Significant expression is also detected in the spleen, thymus, lung, testis and ovary.

The protein resides in the secreted. May play a role in neuropeptide signaling processes. Ligand for LGR7, relaxin-3 receptor-1 and relaxin-3 receptor-2. This chain is Relaxin-3 (Rln3), found in Mus musculus (Mouse).